Reading from the N-terminus, the 355-residue chain is Peptide chain release factor 1 (355 aa).

The residue at position 233 (Gln233) is an N5-methylglutamine.

The protein belongs to the prokaryotic/mitochondrial release factor family. In terms of processing, methylated by PrmC. Methylation increases the termination efficiency of RF1.

It is found in the cytoplasm. Functionally, peptide chain release factor 1 directs the termination of translation in response to the peptide chain termination codons UAG and UAA. The polypeptide is Peptide chain release factor 1 (Syntrophomonas wolfei subsp. wolfei (strain DSM 2245B / Goettingen)).